We begin with the raw amino-acid sequence, 378 residues long: Putative glutamate--cysteine ligase 2 (378 aa).

This sequence belongs to the glutamate--cysteine ligase type 2 family. YbdK subfamily.

It catalyses the reaction L-cysteine + L-glutamate + ATP = gamma-L-glutamyl-L-cysteine + ADP + phosphate + H(+). ATP-dependent carboxylate-amine ligase which exhibits weak glutamate--cysteine ligase activity. The protein is Putative glutamate--cysteine ligase 2 of Leifsonia xyli subsp. xyli (strain CTCB07).